The chain runs to 374 residues: DNA replication and repair protein RecF (374 aa).

ATP is bound at residue 34-41; sequence GNNGSGKT.

This sequence belongs to the RecF family.

The protein localises to the cytoplasm. The RecF protein is involved in DNA metabolism; it is required for DNA replication and normal SOS inducibility. RecF binds preferentially to single-stranded, linear DNA. It also seems to bind ATP. The sequence is that of DNA replication and repair protein RecF from Allorhizobium ampelinum (strain ATCC BAA-846 / DSM 112012 / S4) (Agrobacterium vitis (strain S4)).